Here is a 142-residue protein sequence, read N- to C-terminus: Large ribosomal subunit protein uL16 (142 aa).

The segment covering 1 to 14 has biased composition (basic residues); sequence MLSPRRTKFRKQQR. The disordered stretch occupies residues 1 to 22; it reads MLSPRRTKFRKQQRGRMTGKAT.

Belongs to the universal ribosomal protein uL16 family. Part of the 50S ribosomal subunit.

Binds 23S rRNA and is also seen to make contacts with the A and possibly P site tRNAs. This Synechococcus elongatus (strain ATCC 33912 / PCC 7942 / FACHB-805) (Anacystis nidulans R2) protein is Large ribosomal subunit protein uL16.